Consider the following 203-residue polypeptide: Thymidylate kinase (203 aa).

Residue 10–17 (GIDGCGKT) participates in ATP binding.

This sequence belongs to the thymidylate kinase family.

It catalyses the reaction dTMP + ATP = dTDP + ADP. In terms of biological role, phosphorylation of dTMP to form dTDP in both de novo and salvage pathways of dTTP synthesis. This is Thymidylate kinase from Thermoanaerobacter pseudethanolicus (strain ATCC 33223 / 39E) (Clostridium thermohydrosulfuricum).